A 239-amino-acid polypeptide reads, in one-letter code: Large ribosomal subunit protein uL3 (239 aa).

Disordered regions lie at residues 140–164 (SHRS…KMPG) and 211–239 (PLPK…QEGA). Glutamine 151 is subject to N5-methylglutamine.

Belongs to the universal ribosomal protein uL3 family. As to quaternary structure, part of the 50S ribosomal subunit. Forms a cluster with proteins L14 and L19. Methylated by PrmB.

In terms of biological role, one of the primary rRNA binding proteins, it binds directly near the 3'-end of the 23S rRNA, where it nucleates assembly of the 50S subunit. The sequence is that of Large ribosomal subunit protein uL3 from Bradyrhizobium sp. (strain ORS 278).